Here is a 30-residue protein sequence, read N- to C-terminus: Cyclotide hyen-G (30 aa).

The segment at residues glycine 1–aspartate 30 is a cross-link (cyclopeptide (Gly-Asp)). Cystine bridges form between cysteine 4–cysteine 20, cysteine 8–cysteine 22, and cysteine 13–cysteine 27.

This is a cyclic peptide. Detected in stems (at protein level).

In terms of biological role, probably participates in a plant defense mechanism. The sequence is that of Cyclotide hyen-G from Pigea enneasperma (Spade flower).